Reading from the N-terminus, the 420-residue chain is UPF0229 protein LPC_3097 (420 aa).

The disordered stretch occupies residues 83 to 107; it reads IAGDRIKRPGGGAGGAGGNASDSGE. The span at 91–100 shows a compositional bias: gly residues; the sequence is PGGGAGGAGG.

The protein belongs to the UPF0229 family.

The sequence is that of UPF0229 protein LPC_3097 from Legionella pneumophila (strain Corby).